A 106-amino-acid chain; its full sequence is ATP-dependent Clp protease adapter protein ClpS (106 aa).

The segment at 1–22 is disordered; it reads MTDEPNQDDPQGPEVEAAKPSL.

This sequence belongs to the ClpS family. Binds to the N-terminal domain of the chaperone ClpA.

Involved in the modulation of the specificity of the ClpAP-mediated ATP-dependent protein degradation. This is ATP-dependent Clp protease adapter protein ClpS from Halorhodospira halophila (strain DSM 244 / SL1) (Ectothiorhodospira halophila (strain DSM 244 / SL1)).